The following is a 223-amino-acid chain: Putative synaptogyrin-2 like protein (223 aa).

N-acetylmethionine is present on Met-1. Ser-3 is modified (phosphoserine). The MARVEL domain occupies 20–170 (FLTQPQVVAR…LASLTYQRYK (151 aa)). A run of 4 helical transmembrane segments spans residues 26 to 46 (VVAR…IYGE), 71 to 91 (GSAI…DAYF), 104 to 124 (VIGD…GFCF), and 146 to 166 (AAIT…SLTY). Residues 197 to 223 (ASVDNYQQPPFTQNAETTEGYQPPPVY) form a disordered region. Polar residues predominate over residues 200–216 (DNYQQPPFTQNAETTEG).

Belongs to the synaptogyrin family.

Its subcellular location is the membrane. In Homo sapiens (Human), this protein is Putative synaptogyrin-2 like protein.